The primary structure comprises 470 residues: E3 SUMO-protein ligase EGR2 (470 aa).

The segment covering 126 to 141 (PPASTTASSSVTSASP) has biased composition (low complexity). 3 disordered regions span residues 126-153 (PPAS…GVCT), 159-178 (PELD…SGCT), and 185-210 (PSAF…SYPS). The segment covering 190-202 (SPPSTTSTSSLAY) has biased composition (low complexity). The residue at position 247 (lysine 247) is an N6-acetyllysine; by EP300. Residues 275-291 (GPGAGVTGPGASGGGEG) show a composition bias toward gly residues. A disordered region spans residues 275–345 (GPGAGVTGPG…PYPCPAEGCD (71 aa)). 3 consecutive C2H2-type zinc fingers follow at residues 337–361 (YPCP…IRIH), 367–389 (FQCR…IRTH), and 395–417 (FACD…TKIH). The tract at residues 408-470 (DERKRHTKIH…ASCTSRTRTP (63 aa)) is disordered. Over residues 412 to 422 (RHTKIHLRQKE) the composition is skewed to basic residues. Low complexity predominate over residues 426 to 439 (SAPSAPPSAQSSAS). Residues 440-450 (GPGGSQAGGSL) are compositionally biased toward gly residues.

Belongs to the EGR C2H2-type zinc-finger protein family. As to quaternary structure, interacts with HCFC1. Interacts with WWP2. Interacts with UBC9. Interacts with CITED1. Interacts (via phosphorylated form) with SFN. Ubiquitinated by WWP2 leading to proteasomal degradation. In terms of processing, acetylated at Lys-247. May be deacetylated by HDAC6, HDAC10 or SIRT1. Expressed mainly in the thymus.

The protein localises to the nucleus. It participates in protein modification; protein sumoylation. Functionally, sequence-specific DNA-binding transcription factor. Plays a role in hindbrain segmentation by regulating the expression of a subset of homeobox containing genes and in Schwann cell myelination by regulating the expression of genes involved in the formation and maintenance of myelin. Binds to two EGR2-consensus sites EGR2A (5'-CTGTAGGAG-3') and EGR2B (5'-ATGTAGGTG-3') in the HOXB3 enhancer and promotes HOXB3 transcriptional activation. Binds to specific DNA sites located in the promoter region of HOXA4, HOXB2 and ERBB2. Regulates hindbrain segmentation by controlling the expression of Hox genes, such as HOXA4, HOXB3 and HOXB2, and thereby specifying odd and even rhombomeres. Promotes the expression of HOXB3 in the rhombomere r5 and of HOXB3 in r3 and r5 in the hindbrain. Regulates myelination in the peripheral nervous system after birth, possibly by regulating the expression of myelin proteins, such as MPZ, and by promoting the differentiation of Schwann cells. Involved in the development of the jaw openener musculature, probably by playing a role in its innervation through trigeminal motor neurons. May play a role in adipogenesis, possibly by regulating the expression of CEBPB. Its function is as follows. E3 SUMO-protein ligase helping SUMO1 conjugation to its coregulators NAB1 and NAB2, whose sumoylation down-regulates EGR2 transcriptional activity. This is E3 SUMO-protein ligase EGR2 (Egr2) from Mus musculus (Mouse).